A 423-amino-acid polypeptide reads, in one-letter code: Putative protein phosphatase 2C 50 (423 aa).

The PPM-type phosphatase domain maps to 52 to 380 (IFAFPFPTGT…DNMAAVVVPL (329 aa)). Mn(2+) is bound by residues aspartate 74, glycine 75, aspartate 320, and aspartate 371.

Belongs to the PP2C family. It depends on Mg(2+) as a cofactor. Mn(2+) serves as cofactor.

The enzyme catalyses O-phospho-L-seryl-[protein] + H2O = L-seryl-[protein] + phosphate. The catalysed reaction is O-phospho-L-threonyl-[protein] + H2O = L-threonyl-[protein] + phosphate. The chain is Putative protein phosphatase 2C 50 from Arabidopsis thaliana (Mouse-ear cress).